Consider the following 548-residue polypeptide: MTKIENCKSCLPTENEVEEEALSGVTFLGRVFKVARCERPVFTYMSIILFLVSYIYSVSRDMKDAIIIERLDPASIPYLKVLVVLPVNICIVFSIQKILINTSVSKVFSIMCVMFGIYFCLYGTVLMSFRHIFELNEFLIRDWFADDKMVFMGLQWTIALALPVNSWTSSLMYLSAEIWGTVVFQFLFFALSNEIYTQKQSLRFIPLFLVFGNVALIVSGFSMKFIKYVSEQGSYEFTLFFRKLVFVLMGICSFVIYLIHRYFEDNIAHKPLFVTSEASYKQKTKSKIGFMEAMQTMASSRLVLAISFVVIAYSVSVNMVEASFKTCMSQYALQKGAQADFHVMGVQSDIQLAVGALSIILLLSSFPALIRDKGFLYVAFVPPIFCIFGMASVFGMAALNNSARGNRTLLGFVSIGENLWLEQLLGAIIVTGFKILKYSAVDVSKEALSMRINPAYRARFKGIYDGVCGKLGKAIGSGITNMQNVFYNSSDVRKAAISSLTIVTVITACWGFAVRYLAGKYDKSTHSNTDIDIDLINVDPMEKDADDL.

2 consecutive transmembrane segments (helical) span residues 39-59 (RPVF…YSVS) and 75-95 (SIPY…VFSI). Asn-101 is a glycosylation site (N-linked (GlcNAc...) asparagine). Helical transmembrane passes span 107-127 (VFSI…TVLM), 149-169 (MVFM…SWTS), 171-191 (LMYL…FFAL), 204-224 (FIPL…FSMK), 239-259 (LFFR…IYLI), 302-322 (LVLA…MVEA), 350-370 (IQLA…PALI), and 374-394 (GFLY…ASVF). 2 N-linked (GlcNAc...) asparagine glycosylation sites follow: Asn-400 and Asn-406. The helical transmembrane segment at 410–430 (LGFVSIGENLWLEQLLGAIIV) threads the bilayer. N-linked (GlcNAc...) asparagine glycosylation occurs at Asn-488. The chain crosses the membrane as a helical span at residues 494–514 (KAAISSLTIVTVITACWGFAV).

It belongs to the ADP/ATP translocase tlc family.

It localises to the cell membrane. Its function is as follows. ATP transporter involved in the uptake of ATP from the host cell cytoplasm. Provides the microsporidian cell with host ATP in exchange for ADP. This is an obligate exchange system. This energy acquiring activity is an important component of microsporidian parasitism. The sequence is that of ADP,ATP carrier protein 1 (ANC1) from Paranosema grylli (Microsporidian parasite).